We begin with the raw amino-acid sequence, 502 residues long: Probable ADP-dependent glucokinase (502 aa).

Positions 1–32 (MFSETFVPSIFSYKHRLLHLSVLFFIVPYWYS) are cleaved as a signal peptide. The region spanning 44–497 (SVETAMFLSW…LLYSQFYRLN (454 aa)) is the ADPK domain. Residues Asn-89 and Asn-190 are each glycosylated (N-linked (GlcNAc...) asparagine). Residues Glu-290, Glu-320, and Asp-481 each contribute to the Mg(2+) site. The active-site Proton acceptor is Asp-481.

Belongs to the ADP-dependent glucokinase family. In terms of assembly, monomer. The cofactor is Mg(2+).

It is found in the secreted. It carries out the reaction D-glucose + ADP = D-glucose 6-phosphate + AMP + H(+). It functions in the pathway carbohydrate degradation; glycolysis. Its function is as follows. Catalyzes the phosphorylation of D-glucose to D-glucose 6-phosphate using ADP as the phosphate donor. GDP and CDP can replace ADP, but with reduced efficiency. In Caenorhabditis elegans, this protein is Probable ADP-dependent glucokinase.